The chain runs to 433 residues: O-methyltransferase hasC (433 aa).

Residues Glu265 and 293–295 contribute to the S-adenosyl-L-methionine site; that span reads GDF. His313 (proton acceptor) is an active-site residue. Positions 413–433 are disordered; the sequence is SPRANGNGNSAGGLEWESELM.

It belongs to the class I-like SAM-binding methyltransferase superfamily. Cation-independent O-methyltransferase family. COMT subfamily.

It functions in the pathway secondary metabolite biosynthesis. In terms of biological role, O-methyltransferase; part of the gene cluster that mediates the biosynthesis of hexadehydro-astechrome (HAS), a tryptophan-derived iron(III)-complex that acts as a virulence factor in infected mice. Within the pathway, hasC, with the cytochrome P450 monooxygenase hasH and the FAD-linked oxidoreductase hasG, convert the hasE-prenylated Trp-Ala-dipeptide into an O-methylated diketopiperazine that is then released from the hasD NRPS. The HAS biosynthesis begins with the synthesis of a tethered Trp-Ala dipeptide by the NRPS hasD. The 7-dimethylallyltryptophan synthase hasE then catalyzes the prenylation of the hasD-tethered tryptophan or the resulting tethered Trp-Ala dipeptide at the C-7 position of the indole moiety. HAS biosynthesis continues via tethered intermediates with the succesive actions of the cytochrome P450 monooxygenase hasH, the O-methyltransferase hasC, and the FAD-linked oxidoreductase hasG. The resulting O-methylated diketopiperazine is then released from hasD. Finally, three O-methylated diketopiperazine molecules assemble in a trimeric complex with Fe(III) to produce hexadehydro-astechrome. The chain is O-methyltransferase hasC from Aspergillus fumigatus (strain CBS 144.89 / FGSC A1163 / CEA10) (Neosartorya fumigata).